The sequence spans 289 residues: Serine/threonine-protein phosphatase Pgam5, mitochondrial (289 aa).

The protein belongs to the phosphoglycerate mutase family. BPG-dependent PGAM subfamily. In terms of assembly, interacts with Pk92B/ASK1.

It localises to the mitochondrion outer membrane. The enzyme catalyses O-phospho-L-seryl-[protein] + H2O = L-seryl-[protein] + phosphate. It catalyses the reaction O-phospho-L-threonyl-[protein] + H2O = L-threonyl-[protein] + phosphate. In terms of biological role, displays phosphatase activity for serine/threonine residues, and dephosphorylates and activates Pk92B kinase. Has apparently no phosphoglycerate mutase activity. The sequence is that of Serine/threonine-protein phosphatase Pgam5, mitochondrial from Drosophila grimshawi (Hawaiian fruit fly).